Consider the following 51-residue polypeptide: VAPPQHLCGSHLVDALYLVCGDRGFFYNPKGIVEQCCHKPCNIFDLQNYCN.

3 disulfide bridges follow: cysteine 8-cysteine 37, cysteine 20-cysteine 50, and cysteine 36-cysteine 41.

It belongs to the insulin family. In terms of assembly, heterodimer of a B chain and an A chain linked by two disulfide bonds.

It localises to the secreted. Insulin decreases blood glucose concentration. It increases cell permeability to monosaccharides, amino acids and fatty acids. It accelerates glycolysis, the pentose phosphate cycle, and glycogen synthesis in liver. This is Insulin from Seriola quinqueradiata (Five-ray yellowtail).